Here is a 436-residue protein sequence, read N- to C-terminus: 3-ketoacyl-CoA thiolase (436 aa).

Cys-99 serves as the catalytic Acyl-thioester intermediate. Catalysis depends on proton acceptor residues His-392 and Cys-422.

Belongs to the thiolase-like superfamily. Thiolase family. In terms of assembly, heterotetramer of two alpha chains (FadJ) and two beta chains (FadI).

It is found in the cytoplasm. The enzyme catalyses an acyl-CoA + acetyl-CoA = a 3-oxoacyl-CoA + CoA. It participates in lipid metabolism; fatty acid beta-oxidation. In terms of biological role, catalyzes the final step of fatty acid oxidation in which acetyl-CoA is released and the CoA ester of a fatty acid two carbons shorter is formed. The sequence is that of 3-ketoacyl-CoA thiolase from Salmonella dublin (strain CT_02021853).